An 835-amino-acid chain; its full sequence is BCL11 transcription factor A (835 aa).

The segment covering 1–12 (MSRRKQGKPQHL) has biased composition (basic residues). A disordered region spans residues 1-41 (MSRRKQGKPQHLSKREFSPEPLEAILTDDEPDHGPLGAPEG). Residues 1–210 (MSRRKQGKPQ…SEHGSPLTPR (210 aa)) are required for nuclear body formation and for SUMO1 recruitment. The segment at 45 to 71 (LLTCGQCQMNFPLGDILIFIEHKRKQC) adopts a C2HC-type zinc-finger fold. Cysteine 48, cysteine 51, histidine 66, and cysteine 71 together coordinate Zn(2+). Serine 86 carries the post-translational modification Phosphoserine. Residues lysine 123 and lysine 164 each participate in a glycyl lysine isopeptide (Lys-Gly) (interchain with G-Cter in SUMO2) cross-link. A C2H2-type 1 zinc finger spans residues 170–193 (YTCTTCKQPFTSAWFLLQHAQNTH). The residue at position 205 (serine 205) is a Phosphoserine. The residue at position 271 (arginine 271) is an Asymmetric dimethylarginine. The interval 323–376 (AGNTSSPPLSPGRPSPMQRLLQPFQPGSKPPFLATPPLPPLQSAPPPSQPPVKS) is disordered. 2 positions are modified to phosphoserine: serine 332 and serine 337. Residues 355–372 (LATPPLPPLQSAPPPSQP) are compositionally biased toward pro residues. C2H2-type zinc fingers lie at residues 377 to 399 (KSCEFCGKTFKFQSNLVVHRRSH) and 405 to 429 (YKCNLCDHACTQASKLKRHMKTHMH). Residues 421 to 430 (KRHMKTHMHK) show a composition bias toward basic residues. Disordered stretches follow at residues 421 to 458 (KRHMKTHMHKSSPMTVKSDDGLSTASSPEPGTSDLVGS), 471 to 512 (KSEN…ERVD), and 572 to 619 (RGHL…GLSK). Residues 441 to 450 (GLSTASSPEP) are compositionally biased toward polar residues. Phosphoserine is present on residues serine 446 and serine 447. The span at 482 to 506 (NGDEEEEEDDEEEEEEEEEEEEELT) shows a compositional bias: acidic residues. Over residues 574–584 (HLAEAEGHRDT) the composition is skewed to basic and acidic residues. Serine 608 bears the Phosphoserine mark. Lysine 620 participates in a covalent cross-link: Glycyl lysine isopeptide (Lys-Gly) (interchain with G-Cter in SUMO2). Phosphoserine occurs at positions 625 and 630. Residue lysine 634 forms a Glycyl lysine isopeptide (Lys-Gly) (interchain with G-Cter in SUMO1) linkage. Residues 678 to 740 (DSRQSPFASS…GRPSSKEGRR (63 aa)) form a disordered region. Over residues 682 to 696 (SPFASSSEHSSENGS) the composition is skewed to low complexity. The residue at position 701 (threonine 701) is a Phosphothreonine. Over residues 706–720 (LDGGISGRSGTGSGG) the composition is skewed to gly residues. Residues 737 to 835 (EGRRSDTCEY…RVLNNDIKTE (99 aa)) form a DNA-binding region. A C2H2-type 4 zinc finger spans residues 742–764 (DTCEYCGKVFKNCSNLTVHRRSH). Zn(2+)-binding residues include cysteine 744, cysteine 747, histidine 760, and histidine 764. Residues 765 to 769 (TGERP) are disordered. Residues 770–792 (YKCELCNYACAQSSKLTRHMKTH) form a C2H2-type 5 zinc finger. Positions 772, 775, 788, and 792 each coordinate Zn(2+). The segment at 793-799 (GQVGKDV) is disordered. The segment at 800–823 (YKCEICKMPFSVYSTLEKHMKKWH) adopts a C2H2-type 6 zinc-finger fold. Residues cysteine 802, cysteine 805, histidine 818, and histidine 823 each contribute to the Zn(2+) site. Lysine 833 participates in a covalent cross-link: Glycyl lysine isopeptide (Lys-Gly) (interchain with G-Cter in SUMO2).

As to quaternary structure, homotetrameric; self-associates via C2HC-type zinc finger domain. Interacts with MTA2, a component of the nucleosome remodeling and deacetylase (NuRD) repressor complex. Interacts (via its C2H2-type zinc finger domains 4, 5 and 6) with promoter region of gamma-globulin. Interacts with NR2F1, PIAS3, NR2F2 and NR2F6. Isoform 1, isoform 2 and isoform 3 form homodimers and heterodimers. Isoform 2 interacts with TBR1. In terms of processing, sumoylated with SUMO1. As to expression, expressed at high levels in brain, spleen thymus, bone marrow and testis. Expressed in CD34-positive myeloid precursor cells, B-cells, monocytes and megakaryocytes. Expression is tightly regulated during B-cell development. In terms of tissue distribution, expressed in fetal and adult brain, and in the plasmacytoid dendritic cell.

Its subcellular location is the cytoplasm. It is found in the nucleus. The protein localises to the chromosome. The protein resides in the nucleus matrix. Transcription factor. Associated with the BAF SWI/SNF chromatin remodeling complex. Binds to the 5'-TGACCA-3' sequence motif in regulatory regions of target genes, including a distal promoter of the HBG1 hemoglobin subunit gamma-1 gene. Involved in regulation of the developmental switch from gamma- to beta-globin, probably via direct repression of HBG1; hence indirectly repressing fetal hemoglobin (HbF) level. Involved in brain development. May play a role in hematopoiesis. Essential factor in lymphopoiesis required for B-cell formation in fetal liver. May function as a modulator of the transcriptional repression activity of NR2F2. This Homo sapiens (Human) protein is BCL11 transcription factor A (BCL11A).